A 249-amino-acid chain; its full sequence is Coproheme decarboxylase (249 aa).

Residues Arg-131, 145-149 (YPMNK), His-172, Gln-185, and Ser-223 contribute to the Fe-coproporphyrin III site. Tyr-145 is an active-site residue.

The protein belongs to the ChdC family. Type 1 subfamily. Requires Fe-coproporphyrin III as cofactor.

It carries out the reaction Fe-coproporphyrin III + 2 H2O2 + 2 H(+) = heme b + 2 CO2 + 4 H2O. The enzyme catalyses Fe-coproporphyrin III + H2O2 + H(+) = harderoheme III + CO2 + 2 H2O. It catalyses the reaction harderoheme III + H2O2 + H(+) = heme b + CO2 + 2 H2O. Its pathway is porphyrin-containing compound metabolism; protoheme biosynthesis. In terms of biological role, involved in coproporphyrin-dependent heme b biosynthesis. Catalyzes the decarboxylation of Fe-coproporphyrin III (coproheme) to heme b (protoheme IX), the last step of the pathway. The reaction occurs in a stepwise manner with a three-propionate intermediate. This chain is Coproheme decarboxylase, found in Thermus thermophilus (strain ATCC BAA-163 / DSM 7039 / HB27).